The following is a 287-amino-acid chain: Protoheme IX farnesyltransferase (287 aa).

7 helical membrane-spanning segments follow: residues 19–39, 100–120, 134–154, 162–182, 212–232, 233–253, and 267–287; these read LMVA…VTIT, MVLC…IVAV, FALL…WLAV, MLVV…WLHA, VWFH…LLEW, VGMR…AMLA, and VLCA…VSLF.

This sequence belongs to the UbiA prenyltransferase family. Protoheme IX farnesyltransferase subfamily.

The protein resides in the cell inner membrane. It carries out the reaction heme b + (2E,6E)-farnesyl diphosphate + H2O = Fe(II)-heme o + diphosphate. It functions in the pathway porphyrin-containing compound metabolism; heme O biosynthesis; heme O from protoheme: step 1/1. Its function is as follows. Converts heme B (protoheme IX) to heme O by substitution of the vinyl group on carbon 2 of heme B porphyrin ring with a hydroxyethyl farnesyl side group. The sequence is that of Protoheme IX farnesyltransferase from Nitratidesulfovibrio vulgaris (strain ATCC 29579 / DSM 644 / CCUG 34227 / NCIMB 8303 / VKM B-1760 / Hildenborough) (Desulfovibrio vulgaris).